The primary structure comprises 102 residues: Small ribosomal subunit protein uS10 (102 aa).

The protein belongs to the universal ribosomal protein uS10 family. As to quaternary structure, part of the 30S ribosomal subunit.

In terms of biological role, involved in the binding of tRNA to the ribosomes. In Acidithiobacillus ferrooxidans (strain ATCC 53993 / BNL-5-31) (Leptospirillum ferrooxidans (ATCC 53993)), this protein is Small ribosomal subunit protein uS10.